The primary structure comprises 337 residues: Lipoyl synthase (337 aa).

Residues cysteine 81, cysteine 86, cysteine 92, cysteine 107, cysteine 111, cysteine 114, and serine 323 each contribute to the [4Fe-4S] cluster site. The region spanning 93–312 (FSHGTATFMI…EDYGNALGFS (220 aa)) is the Radical SAM core domain.

This sequence belongs to the radical SAM superfamily. Lipoyl synthase family. [4Fe-4S] cluster is required as a cofactor.

It is found in the cytoplasm. The enzyme catalyses [[Fe-S] cluster scaffold protein carrying a second [4Fe-4S](2+) cluster] + N(6)-octanoyl-L-lysyl-[protein] + 2 oxidized [2Fe-2S]-[ferredoxin] + 2 S-adenosyl-L-methionine + 4 H(+) = [[Fe-S] cluster scaffold protein] + N(6)-[(R)-dihydrolipoyl]-L-lysyl-[protein] + 4 Fe(3+) + 2 hydrogen sulfide + 2 5'-deoxyadenosine + 2 L-methionine + 2 reduced [2Fe-2S]-[ferredoxin]. It participates in protein modification; protein lipoylation via endogenous pathway; protein N(6)-(lipoyl)lysine from octanoyl-[acyl-carrier-protein]: step 2/2. Its function is as follows. Catalyzes the radical-mediated insertion of two sulfur atoms into the C-6 and C-8 positions of the octanoyl moiety bound to the lipoyl domains of lipoate-dependent enzymes, thereby converting the octanoylated domains into lipoylated derivatives. The chain is Lipoyl synthase from Xanthomonas campestris pv. campestris (strain B100).